Consider the following 120-residue polypeptide: UPF0231 protein YacL (120 aa).

This sequence belongs to the UPF0231 family.

This Salmonella typhi protein is UPF0231 protein YacL.